We begin with the raw amino-acid sequence, 298 residues long: Protoheme IX farnesyltransferase (298 aa).

Transmembrane regions (helical) follow at residues 16–36, 45–65, 93–113, 114–134, 141–161, 172–192, 218–238, 241–261, and 277–297; these read VVAL…PDMP, ALGF…NQLL, VFAG…VNVI, TAVL…VYLK, IVIG…AVTG, SLLV…LAIF, ILVY…VGMS, FYLG…WRML, and IVYL…LPWV.

The protein belongs to the UbiA prenyltransferase family. Protoheme IX farnesyltransferase subfamily.

It is found in the cell inner membrane. It catalyses the reaction heme b + (2E,6E)-farnesyl diphosphate + H2O = Fe(II)-heme o + diphosphate. The protein operates within porphyrin-containing compound metabolism; heme O biosynthesis; heme O from protoheme: step 1/1. In terms of biological role, converts heme B (protoheme IX) to heme O by substitution of the vinyl group on carbon 2 of heme B porphyrin ring with a hydroxyethyl farnesyl side group. The sequence is that of Protoheme IX farnesyltransferase from Xanthomonas axonopodis pv. citri (strain 306).